The chain runs to 184 residues: NADH-quinone oxidoreductase subunit B 2 (184 aa).

[4Fe-4S] cluster is bound by residues Cys-59, Cys-60, Cys-125, and Cys-153.

The protein belongs to the complex I 20 kDa subunit family. As to quaternary structure, NDH-1 is composed of 14 different subunits. Subunits NuoB, C, D, E, F, and G constitute the peripheral sector of the complex. [4Fe-4S] cluster is required as a cofactor.

Its subcellular location is the cell inner membrane. The enzyme catalyses a quinone + NADH + 5 H(+)(in) = a quinol + NAD(+) + 4 H(+)(out). In terms of biological role, NDH-1 shuttles electrons from NADH, via FMN and iron-sulfur (Fe-S) centers, to quinones in the respiratory chain. Couples the redox reaction to proton translocation (for every two electrons transferred, four hydrogen ions are translocated across the cytoplasmic membrane), and thus conserves the redox energy in a proton gradient. The chain is NADH-quinone oxidoreductase subunit B 2 from Solibacter usitatus (strain Ellin6076).